The sequence spans 872 residues: Probably inactive leucine-rich repeat receptor-like protein kinase At5g06940 (872 aa).

The first 26 residues, 1 to 26 (MATRFKHQFSISLALTFFFFFTKTFS), serve as a signal peptide directing secretion. Over 27–540 (FTENEELGNL…RSNFHKKGGK (514 aa)) the chain is Extracellular. 3 N-linked (GlcNAc...) asparagine glycosylation sites follow: Asn-55, Asn-63, and Asn-86. LRR repeat units follow at residues 79–98 (SINL…ICDL), 99–122 (PYLT…LSRC), 123–146 (VTLE…ISEF), 147–169 (SSLK…DLGL), 171–193 (FNLQ…AIGK), 195–217 (SELV…SFLG), 219–243 (LDKL…FVGL), 244–267 (TSLR…LGPS), 269–292 (KNLV…ICSG), 294–316 (RLIN…IGEC), 317–340 (LSLE…LWKL), 341–365 (PRIK…SLAS), 367–389 (LEQV…GLVK), 391–412 (LYKF…FCDS), 413–435 (PVLS…LKNC), 436–459 (KKLV…LADL), 460–482 (HVLT…GLQN), and 484–506 (KLAL…LVSG). The N-linked (GlcNAc...) asparagine glycan is linked to Asn-129. An N-linked (GlcNAc...) asparagine glycan is attached at Asn-255. N-linked (GlcNAc...) asparagine glycosylation is present at Asn-297. An N-linked (GlcNAc...) asparagine glycan is attached at Asn-374. Asn-419 is a glycosylation site (N-linked (GlcNAc...) asparagine). N-linked (GlcNAc...) asparagine glycosylation is present at Asn-489. Residues 541–561 (ALVLSLICLALAIATFLAVLY) traverse the membrane as a helical segment. Residues 562–872 (RYSRKKVQFK…ISSSVSPVSA (311 aa)) are Cytoplasmic-facing. At Thr-585 the chain carries Phosphothreonine. Residues 589–863 (LMKVVNESCP…VKVIKLLEGI (275 aa)) enclose the Protein kinase domain. ATP-binding positions include 595–603 (ESCPSGSEV) and Lys-617. Phosphotyrosine is present on residues Tyr-662, Tyr-699, Tyr-754, and Tyr-761.

The protein belongs to the protein kinase superfamily. Ser/Thr protein kinase family.

It is found in the membrane. The sequence is that of Probably inactive leucine-rich repeat receptor-like protein kinase At5g06940 from Arabidopsis thaliana (Mouse-ear cress).